A 72-amino-acid chain; its full sequence is Phaiodotoxin-3 (72 aa).

The LCN-type CS-alpha/beta domain occupies 1-72 (KFIRHKDESF…CFGALESKCA (72 aa)). 4 cysteine pairs are disulfide-bonded: cysteine 13/cysteine 38, cysteine 23/cysteine 50, cysteine 27/cysteine 52, and cysteine 63/cysteine 71.

Belongs to the long (4 C-C) scorpion toxin superfamily. Sodium channel inhibitor family. As to expression, expressed by the venom gland.

The protein resides in the secreted. Sodium channel (Nav) specific neurotoxin. The chain is Phaiodotoxin-3 from Anuroctonus phaiodactylus (Mafia scorpion).